Reading from the N-terminus, the 583-residue chain is R-linalool synthase QH5, chloroplastic (583 aa).

Residues 1–40 constitute a chloroplast transit peptide; sequence MASISLFPYSILKQTSPLARGTAYNRIYSTKTTGITVDVA. 5 residues coordinate (2E)-geranyl diphosphate: R298, D335, D339, R476, and D479. The Mg(2+) site is built by D335 and D339. The DDXXD motif signature appears at 335 to 339; sequence DDVYD. Residues D479, T483, and E487 each coordinate Mg(2+). D492 is a K(+) binding site.

This sequence belongs to the terpene synthase family. Tpsb subfamily. Mg(2+) serves as cofactor. Requires Mn(2+) as cofactor. The cofactor is K(+). In terms of tissue distribution, expressed in every aerial organ except for the stem stele of mature plants. Not detected in roots.

Its subcellular location is the plastid. The protein localises to the chloroplast. The enzyme catalyses (2E)-geranyl diphosphate + H2O = (R)-linalool + diphosphate. The protein operates within secondary metabolite biosynthesis; terpenoid biosynthesis. In terms of biological role, monoterpene synthase that catalyzes the formation of (3R)-linalool from geranyl diphosphate, but not from isopentenyl diphosphate, dimethylallyl diphosphate, chrysanthemyl diphosphate, farnesyl diphosphate, (+)-copalyl diphosphate or geranylgeranyl diphosphate. This Artemisia annua (Sweet wormwood) protein is R-linalool synthase QH5, chloroplastic.